Consider the following 300-residue polypeptide: uncharacterized protein (300 aa).

Basic and acidic residues predominate over residues methionine 1–alanine 19. The segment at methionine 1 to glutamine 20 is disordered.

This is an uncharacterized protein from Orgyia pseudotsugata multicapsid polyhedrosis virus (OpMNPV).